The chain runs to 337 residues: DNA-directed RNA polymerase subunit alpha (337 aa).

Positions 1-231 (MRNITTSAYT…KQLSVFDKIT (231 aa)) are alpha N-terminal domain (alpha-NTD). Positions 247-337 (ENTKLLQNIT…IAELKAQNEG (91 aa)) are alpha C-terminal domain (alpha-CTD).

Belongs to the RNA polymerase alpha chain family. Homodimer. The RNAP catalytic core consists of 2 alpha, 1 beta, 1 beta' and 1 omega subunit. When a sigma factor is associated with the core the holoenzyme is formed, which can initiate transcription.

The catalysed reaction is RNA(n) + a ribonucleoside 5'-triphosphate = RNA(n+1) + diphosphate. DNA-dependent RNA polymerase catalyzes the transcription of DNA into RNA using the four ribonucleoside triphosphates as substrates. This chain is DNA-directed RNA polymerase subunit alpha, found in Campylobacter jejuni subsp. jejuni serotype O:2 (strain ATCC 700819 / NCTC 11168).